Here is a 410-residue protein sequence, read N- to C-terminus: Multifunctional CCA protein (410 aa).

Positions 8 and 11 each coordinate ATP. Residues G8 and R11 each contribute to the CTP site. D21 and D23 together coordinate Mg(2+). ATP-binding residues include R91, R138, and R141. Positions 91, 138, and 141 each coordinate CTP. Positions 229 to 347 constitute an HD domain; sequence TGIHQEMVSD…AQLALVCEAD (119 aa).

It belongs to the tRNA nucleotidyltransferase/poly(A) polymerase family. Bacterial CCA-adding enzyme type 1 subfamily. As to quaternary structure, monomer. Can also form homodimers and oligomers. The cofactor is Mg(2+). It depends on Ni(2+) as a cofactor.

It carries out the reaction a tRNA precursor + 2 CTP + ATP = a tRNA with a 3' CCA end + 3 diphosphate. The catalysed reaction is a tRNA with a 3' CCA end + 2 CTP + ATP = a tRNA with a 3' CCACCA end + 3 diphosphate. In terms of biological role, catalyzes the addition and repair of the essential 3'-terminal CCA sequence in tRNAs without using a nucleic acid template. Adds these three nucleotides in the order of C, C, and A to the tRNA nucleotide-73, using CTP and ATP as substrates and producing inorganic pyrophosphate. tRNA 3'-terminal CCA addition is required both for tRNA processing and repair. Also involved in tRNA surveillance by mediating tandem CCA addition to generate a CCACCA at the 3' terminus of unstable tRNAs. While stable tRNAs receive only 3'-terminal CCA, unstable tRNAs are marked with CCACCA and rapidly degraded. This Xanthomonas euvesicatoria pv. vesicatoria (strain 85-10) (Xanthomonas campestris pv. vesicatoria) protein is Multifunctional CCA protein.